The chain runs to 190 residues: Small ribosomal subunit protein uS5 (190 aa).

The region spanning 21–84 (FADRLVAINR…EQAKRQMIRV (64 aa)) is the S5 DRBM domain. Residues 156–190 (KKEQSPRSVAQRRGKKVADILPKRDEAPAAEAAEA) are disordered. The span at 171–182 (KVADILPKRDEA) shows a compositional bias: basic and acidic residues.

Belongs to the universal ribosomal protein uS5 family. Part of the 30S ribosomal subunit. Contacts proteins S4 and S8.

Its function is as follows. With S4 and S12 plays an important role in translational accuracy. In terms of biological role, located at the back of the 30S subunit body where it stabilizes the conformation of the head with respect to the body. This chain is Small ribosomal subunit protein uS5, found in Ruegeria pomeroyi (strain ATCC 700808 / DSM 15171 / DSS-3) (Silicibacter pomeroyi).